The following is a 201-amino-acid chain: Protein tirC (201 aa).

The TIR domain maps to 52-186 (ERIKVFIVHG…YVWINYTEDL (135 aa)).

In Dictyostelium discoideum (Social amoeba), this protein is Protein tirC (tirC).